Consider the following 243-residue polypeptide: Protein-L-isoaspartate O-methyltransferase (243 aa).

Serine 87 is a catalytic residue.

The protein belongs to the methyltransferase superfamily. L-isoaspartyl/D-aspartyl protein methyltransferase family.

The protein resides in the cytoplasm. The catalysed reaction is [protein]-L-isoaspartate + S-adenosyl-L-methionine = [protein]-L-isoaspartate alpha-methyl ester + S-adenosyl-L-homocysteine. Its function is as follows. Catalyzes the methyl esterification of L-isoaspartyl residues in peptides and proteins that result from spontaneous decomposition of normal L-aspartyl and L-asparaginyl residues. It plays a role in the repair and/or degradation of damaged proteins. This is Protein-L-isoaspartate O-methyltransferase from Methanosarcina mazei (strain ATCC BAA-159 / DSM 3647 / Goe1 / Go1 / JCM 11833 / OCM 88) (Methanosarcina frisia).